The primary structure comprises 211 residues: Ribosomal RNA small subunit methyltransferase G (211 aa).

S-adenosyl-L-methionine-binding positions include Gly-72, Phe-77, Ile-125–Glu-126, and Arg-141.

It belongs to the methyltransferase superfamily. RNA methyltransferase RsmG family.

It is found in the cytoplasm. The catalysed reaction is guanosine(527) in 16S rRNA + S-adenosyl-L-methionine = N(7)-methylguanosine(527) in 16S rRNA + S-adenosyl-L-homocysteine. Specifically methylates the N7 position of guanine in position 527 of 16S rRNA. This chain is Ribosomal RNA small subunit methyltransferase G, found in Allorhizobium ampelinum (strain ATCC BAA-846 / DSM 112012 / S4) (Agrobacterium vitis (strain S4)).